We begin with the raw amino-acid sequence, 474 residues long: tRNA-2-methylthio-N(6)-dimethylallyladenosine synthase (474 aa).

Residues 3–120 form the MTTase N-terminal domain; sequence KKLHIKTWGC…LPEMIEQIQR (118 aa). 6 residues coordinate [4Fe-4S] cluster: Cys12, Cys49, Cys83, Cys157, Cys161, and Cys164. The 233-residue stretch at 143-375 folds into the Radical SAM core domain; the sequence is RADGPTAFVS…QDRITQQAMR (233 aa). In terms of domain architecture, TRAM spans 378-441; sequence RQMLGTVQRI…TNSLRGEFVR (64 aa).

It belongs to the methylthiotransferase family. MiaB subfamily. As to quaternary structure, monomer. Requires [4Fe-4S] cluster as cofactor.

The protein resides in the cytoplasm. It catalyses the reaction N(6)-dimethylallyladenosine(37) in tRNA + (sulfur carrier)-SH + AH2 + 2 S-adenosyl-L-methionine = 2-methylsulfanyl-N(6)-dimethylallyladenosine(37) in tRNA + (sulfur carrier)-H + 5'-deoxyadenosine + L-methionine + A + S-adenosyl-L-homocysteine + 2 H(+). Functionally, catalyzes the methylthiolation of N6-(dimethylallyl)adenosine (i(6)A), leading to the formation of 2-methylthio-N6-(dimethylallyl)adenosine (ms(2)i(6)A) at position 37 in tRNAs that read codons beginning with uridine. The protein is tRNA-2-methylthio-N(6)-dimethylallyladenosine synthase of Shewanella frigidimarina (strain NCIMB 400).